The following is a 338-amino-acid chain: S-adenosylmethionine:tRNA ribosyltransferase-isomerase (338 aa).

It belongs to the QueA family. As to quaternary structure, monomer.

Its subcellular location is the cytoplasm. It catalyses the reaction 7-aminomethyl-7-carbaguanosine(34) in tRNA + S-adenosyl-L-methionine = epoxyqueuosine(34) in tRNA + adenine + L-methionine + 2 H(+). Its pathway is tRNA modification; tRNA-queuosine biosynthesis. Its function is as follows. Transfers and isomerizes the ribose moiety from AdoMet to the 7-aminomethyl group of 7-deazaguanine (preQ1-tRNA) to give epoxyqueuosine (oQ-tRNA). The chain is S-adenosylmethionine:tRNA ribosyltransferase-isomerase from Francisella tularensis subsp. novicida (strain U112).